The chain runs to 176 residues: MAVRRIVKYGEDILRQKLKPVDFKTLEPQLDAILQDMHDTCMSFQGAGLSANQIGLTHRIAMIFIPEKTPKGEAQKFKRYVVINPVIVSKKGCVTDEEGCLSLPGLWVEIERAESIVVHCLNEKGLPVEIHAKGFLAKALQHEIDHLDGKIFIDHADPKLKPEIKKELKKLSKNWS.

2 residues coordinate Fe cation: Cys-100 and His-142. Glu-143 is a catalytic residue. Residue His-146 coordinates Fe cation.

It belongs to the polypeptide deformylase family. The cofactor is Fe(2+).

The enzyme catalyses N-terminal N-formyl-L-methionyl-[peptide] + H2O = N-terminal L-methionyl-[peptide] + formate. Its function is as follows. Removes the formyl group from the N-terminal Met of newly synthesized proteins. Requires at least a dipeptide for an efficient rate of reaction. N-terminal L-methionine is a prerequisite for activity but the enzyme has broad specificity at other positions. This chain is Peptide deformylase, found in Elusimicrobium minutum (strain Pei191).